Here is a 461-residue protein sequence, read N- to C-terminus: Adenosylmethionine-8-amino-7-oxononanoate aminotransferase (461 aa).

117 to 118 (GA) contacts pyridoxal 5'-phosphate. Tyrosine 150 serves as a coordination point for substrate. Aspartate 263 serves as a coordination point for pyridoxal 5'-phosphate. Substrate is bound by residues lysine 296, glycine 331, and arginine 426. Lysine 296 is subject to N6-(pyridoxal phosphate)lysine.

The protein belongs to the class-III pyridoxal-phosphate-dependent aminotransferase family. BioA subfamily. As to quaternary structure, homodimer. Pyridoxal 5'-phosphate serves as cofactor.

The protein resides in the cytoplasm. The catalysed reaction is (8S)-8-amino-7-oxononanoate + S-adenosyl-L-methionine = S-adenosyl-4-methylsulfanyl-2-oxobutanoate + (7R,8S)-7,8-diammoniononanoate. Its pathway is cofactor biosynthesis; biotin biosynthesis; 7,8-diaminononanoate from 8-amino-7-oxononanoate (SAM route): step 1/1. Functionally, catalyzes the transfer of the alpha-amino group from S-adenosyl-L-methionine (SAM) to 7-keto-8-aminopelargonic acid (KAPA) to form 7,8-diaminopelargonic acid (DAPA). It is the only aminotransferase known to utilize SAM as an amino donor. In Methanocaldococcus jannaschii (strain ATCC 43067 / DSM 2661 / JAL-1 / JCM 10045 / NBRC 100440) (Methanococcus jannaschii), this protein is Adenosylmethionine-8-amino-7-oxononanoate aminotransferase.